The chain runs to 552 residues: Putative transport protein ECA4401 (552 aa).

5 helical membrane-spanning segments follow: residues 4-24, 26-46, 65-85, 90-112, and 158-178; these read IALT…IGNW, IYGV…VGHV, FGLI…FFSS, GLRL…VMLH, and TGYA…MWLM. RCK C-terminal domains follow at residues 191 to 276 and 279 to 361; these read KQFE…VIGN and ETSL…IVGN. 6 helical membrane passes run 371–391, 393–413, 439–459, 464–484, 493–513, and 530–550; these read MLPV…PLMV, GFPV…ALVL, IVLF…DTLL, VWWI…VGIL, YLTL…LAFA, and VYPL…VLFL.

The protein belongs to the AAE transporter (TC 2.A.81) family. YidE subfamily.

The protein localises to the cell membrane. In Pectobacterium atrosepticum (strain SCRI 1043 / ATCC BAA-672) (Erwinia carotovora subsp. atroseptica), this protein is Putative transport protein ECA4401.